The sequence spans 912 residues: Translation initiation factor IF-2 (912 aa).

Residues Ser-26–Arg-297 form a disordered region. Over residues Lys-56 to Lys-74 the composition is skewed to low complexity. A compositionally biased stretch (pro residues) spans Ala-100 to Ala-120. Low complexity predominate over residues Ala-121–Pro-131. Pro residues-rich tracts occupy residues Ala-132–Pro-152, Pro-173–Pro-183, and Asn-192–Gly-218. Gly residues predominate over residues Pro-219–Gly-283. Basic residues predominate over residues Lys-287 to Lys-296. One can recognise a tr-type G domain in the interval Thr-408–Leu-579. Residues Gly-417 to Thr-424 form a G1 region. Residue Gly-417–Thr-424 coordinates GTP. Residues Gly-442–His-446 are G2. Residues Asp-467–Gly-470 form a G3 region. GTP contacts are provided by residues Asp-467–His-471 and Asn-521–Asp-524. The G4 stretch occupies residues Asn-521 to Asp-524. A G5 region spans residues Ser-557–Arg-559.

Belongs to the TRAFAC class translation factor GTPase superfamily. Classic translation factor GTPase family. IF-2 subfamily.

It is found in the cytoplasm. In terms of biological role, one of the essential components for the initiation of protein synthesis. Protects formylmethionyl-tRNA from spontaneous hydrolysis and promotes its binding to the 30S ribosomal subunits. Also involved in the hydrolysis of GTP during the formation of the 70S ribosomal complex. The protein is Translation initiation factor IF-2 of Mycobacteroides abscessus (strain ATCC 19977 / DSM 44196 / CCUG 20993 / CIP 104536 / JCM 13569 / NCTC 13031 / TMC 1543 / L948) (Mycobacterium abscessus).